The chain runs to 186 residues: ADP-ribosylation factor-like protein 8A (186 aa).

Positions 1–19 form an intramembrane region, note=Mediates targeting to membranes; sequence MIALFNKLLDWFKALFWKE. GTP is bound by residues 29–35, 71–75, and 130–133; these read QYSGKTT, DIGGQ, and NKRD.

The protein belongs to the small GTPase superfamily. Arf family. As to quaternary structure, interacts with PLEKHM1. When GTP-bound, interacts with RUFY3 and RUFY4, but not with RUFY1, nor RUFY2. As to expression, ubiquitously expressed.

The protein resides in the late endosome membrane. Its subcellular location is the lysosome membrane. The protein localises to the cytoplasm. It is found in the cytoskeleton. It localises to the spindle. The protein resides in the cell projection. Its subcellular location is the axon. The protein localises to the synapse. Functionally, plays a role in lysosome motility. In neurons, mediates the anterograde axonal long-range transport of presynaptic lysosome-related vesicles required for presynaptic biogenesis and synaptic function. May play a role in chromosome segregation. The polypeptide is ADP-ribosylation factor-like protein 8A (ARL8A) (Homo sapiens (Human)).